The following is a 96-amino-acid chain: Co-chaperonin GroES (96 aa).

The protein belongs to the GroES chaperonin family. Heptamer of 7 subunits arranged in a ring. Interacts with the chaperonin GroEL.

Its subcellular location is the cytoplasm. Functionally, together with the chaperonin GroEL, plays an essential role in assisting protein folding. The GroEL-GroES system forms a nano-cage that allows encapsulation of the non-native substrate proteins and provides a physical environment optimized to promote and accelerate protein folding. GroES binds to the apical surface of the GroEL ring, thereby capping the opening of the GroEL channel. This is Co-chaperonin GroES from Neisseria meningitidis serogroup B (strain ATCC BAA-335 / MC58).